Consider the following 154-residue polypeptide: 6,7-dimethyl-8-ribityllumazine synthase (154 aa).

5-amino-6-(D-ribitylamino)uracil-binding positions include phenylalanine 22, 56 to 58, and 80 to 82; these read SFE and AVI. A (2S)-2-hydroxy-3-oxobutyl phosphate-binding site is contributed by 85-86; sequence ST. Histidine 88 serves as the catalytic Proton donor. Tyrosine 113 provides a ligand contact to 5-amino-6-(D-ribitylamino)uracil. Residue arginine 127 participates in (2S)-2-hydroxy-3-oxobutyl phosphate binding.

Belongs to the DMRL synthase family. Forms an icosahedral capsid composed of 60 subunits, arranged as a dodecamer of pentamers.

The catalysed reaction is (2S)-2-hydroxy-3-oxobutyl phosphate + 5-amino-6-(D-ribitylamino)uracil = 6,7-dimethyl-8-(1-D-ribityl)lumazine + phosphate + 2 H2O + H(+). The protein operates within cofactor biosynthesis; riboflavin biosynthesis; riboflavin from 2-hydroxy-3-oxobutyl phosphate and 5-amino-6-(D-ribitylamino)uracil: step 1/2. In terms of biological role, catalyzes the formation of 6,7-dimethyl-8-ribityllumazine by condensation of 5-amino-6-(D-ribitylamino)uracil with 3,4-dihydroxy-2-butanone 4-phosphate. This is the penultimate step in the biosynthesis of riboflavin. The chain is 6,7-dimethyl-8-ribityllumazine synthase from Sulfurihydrogenibium sp. (strain YO3AOP1).